The sequence spans 499 residues: MGNDRSLALVQGAVGGVLAGIGIAHGGLLWMAPALALLWSACRFPVAASLWGFVAVLLSHRWLLALHPLTWVGVPAPLSVPVAASIWLFCGAAAAVLVGLWAWLGTSIAHLATREAGIRAQLSHALLMASIWGLAEVLLAGSPLFWIGVGGSLLPGDRALAGLARWFGAGGLATLQLLIGWWLWRTALAWRRGVGWRRSLLVGLLCLLLAHGFGWSLLRSSDATAPISVAAWQPAIPTRSKFSEEQQRRLPEALQNALDRADDLDAAWLVAPEGLLPPDAVLLRPAPLPLLSGGFRWLRGQQRSALLVVDRGERQASAFIDKHRLVPLGEWLPALPGGVFRGLSAVGGLQPGAASRLLQWPGPTAAVAICYELSNGAALAQAVADGAQWLLAVANLDPYPLALQRQFIALAQLRSIETARDLLSVANTGPSALVLATGKQQQLLAPFTEGVGLADLHFHQGISGYTRWREAPLIGLMLFAVVGLGLSRVRSWLISLMLC.

6 helical membrane passes run 17 to 37, 38 to 58, 84 to 104, 131 to 151, 163 to 183, and 198 to 218; these read VLAG…ALAL, LWSA…AVLL, ASIW…WAWL, IWGL…GVGG, LARW…GWWL, and RSLL…WSLL. Positions 232-458 constitute a CN hydrolase domain; sequence WQPAIPTRSK…EGVGLADLHF (227 aa). The active-site Proton acceptor is the Glu273. Lys322 is an active-site residue. The active-site Nucleophile is the Cys370. The helical transmembrane segment at 474–494 threads the bilayer; sequence IGLMLFAVVGLGLSRVRSWLI.

Belongs to the CN hydrolase family. Apolipoprotein N-acyltransferase subfamily.

Its subcellular location is the cell inner membrane. It catalyses the reaction N-terminal S-1,2-diacyl-sn-glyceryl-L-cysteinyl-[lipoprotein] + a glycerophospholipid = N-acyl-S-1,2-diacyl-sn-glyceryl-L-cysteinyl-[lipoprotein] + a 2-acyl-sn-glycero-3-phospholipid + H(+). The protein operates within protein modification; lipoprotein biosynthesis (N-acyl transfer). Its function is as follows. Catalyzes the phospholipid dependent N-acylation of the N-terminal cysteine of apolipoprotein, the last step in lipoprotein maturation. This chain is Apolipoprotein N-acyltransferase, found in Prochlorococcus marinus (strain MIT 9313).